We begin with the raw amino-acid sequence, 719 residues long: Capsid protein (719 aa).

The interval 647-678 (GDALPSRERKRQAWQDSTSEETESEAEAQEEK) is disordered. Acidic residues predominate over residues 664-674 (TSEETESEAEA).

Belongs to the anelloviridae capsid protein family.

The protein resides in the virion. Functionally, self assemble to form an icosahedral capsid. The polypeptide is Capsid protein (Torque teno virus (isolate Human/Germany/KAV/2001) (TTV)).